The sequence spans 215 residues: Protein-L-isoaspartate O-methyltransferase 1 (215 aa).

S61 is an active-site residue.

It belongs to the methyltransferase superfamily. L-isoaspartyl/D-aspartyl protein methyltransferase family.

It localises to the cytoplasm. It carries out the reaction [protein]-L-isoaspartate + S-adenosyl-L-methionine = [protein]-L-isoaspartate alpha-methyl ester + S-adenosyl-L-homocysteine. Functionally, catalyzes the methyl esterification of L-isoaspartyl residues in peptides and proteins that result from spontaneous decomposition of normal L-aspartyl and L-asparaginyl residues. It plays a role in the repair and/or degradation of damaged proteins. The chain is Protein-L-isoaspartate O-methyltransferase 1 from Pelobacter propionicus (strain DSM 2379 / NBRC 103807 / OttBd1).